A 429-amino-acid chain; its full sequence is Adenylosuccinate synthetase (429 aa).

GTP is bound by residues 12–18 (GDEGKGK) and 40–42 (GHT). Asp-13 (proton acceptor) is an active-site residue. Residues Asp-13 and Gly-40 each contribute to the Mg(2+) site. IMP contacts are provided by residues 13-16 (DEGK), 38-41 (NAGH), Thr-129, Arg-143, Gln-223, Thr-238, and Arg-302. His-41 serves as the catalytic Proton donor. 298–304 (TVTGRPR) provides a ligand contact to substrate. GTP is bound by residues Arg-304, 330-332 (KLD), and 412-414 (STS).

The protein belongs to the adenylosuccinate synthetase family. In terms of assembly, homodimer. Mg(2+) is required as a cofactor.

It is found in the cytoplasm. The enzyme catalyses IMP + L-aspartate + GTP = N(6)-(1,2-dicarboxyethyl)-AMP + GDP + phosphate + 2 H(+). It functions in the pathway purine metabolism; AMP biosynthesis via de novo pathway; AMP from IMP: step 1/2. In terms of biological role, plays an important role in the de novo pathway of purine nucleotide biosynthesis. Catalyzes the first committed step in the biosynthesis of AMP from IMP. This Gluconobacter oxydans (strain 621H) (Gluconobacter suboxydans) protein is Adenylosuccinate synthetase.